The sequence spans 450 residues: MNNKRHSTNEQLSLDEINNTIKFDHRSSNKQKFLSFLGPGLLVAVGYMDPGNWITSMQGGAQYGYTLLFVILISSLSAMLLQSMTVRLGIATGMDLAQMTRHYLSRPIAIIFWIIAELAIIATDIAEVIGSAIALNLLFNIPLIVGALITVLDVFLLLFIMKYGFRKIEAIVGTFIFTVLFIFIFEVYISSPQLNAVLNGFIPHSEIITNNGILYIALGIIGATIMPHNLYLHSSIVQSRTYSRHNNEEKAQAIKFATIDSNIQLSIAFVVNCLLLVLGASLFFNSNADDLGGFYDLYHALKTEPVLGATMGAIMSTLFAVALLASGQNSTITGTLAGQIVMEGFLRLHIPNWLRRLITRSLAVIPVIVCLIIFKGNAAKIEQLLVFSQVFLSIALPFCLIPLQLATSNKDLMGPFYNKTWVNIISWTLIIILSILNVYLIVQTFQELQS.

11 consecutive transmembrane segments (helical) span residues 34 to 54, 61 to 81, 108 to 128, 141 to 161, 170 to 190, 212 to 232, 263 to 283, 305 to 325, 361 to 381, 383 to 403, and 422 to 442; these read LSFL…GNWI, AQYG…AMLL, IAII…IAEV, IPLI…LFIM, AIVG…VYIS, GILY…NLYL, IQLS…ASLF, PVLG…ALLA, SLAV…AAKI, QLLV…LIPL, and VNII…YLIV.

It belongs to the NRAMP family.

It localises to the cell membrane. Its function is as follows. H(+)-stimulated, divalent metal cation uptake system. This is Divalent metal cation transporter MntH from Staphylococcus aureus (strain Mu3 / ATCC 700698).